Consider the following 193-residue polypeptide: MTALTQPVRLPFVTTDLDVLLRQVAERDVDAFAALYDRTRSRVYGMVTRVLRDPGYSEETTQDIYLQVWRSAGSYDPKAGSPMAWLLTLAHRRAVDRVRSEEAASQRESRYGAASVDPPVDHVADSVILLDERRRVVDCMGSLSDLQREAIQLAYYEGLTYVQVSERLSANLATIKSRMRDGIRGLKNCLGMS.

A sigma-70 factor domain-2 region spans residues 35–101 (LYDRTRSRVY…RRAVDRVRSE (67 aa)). Residues 59-62 (ETTQ) carry the Polymerase core binding motif. The sigma-70 factor domain-4 stretch occupies residues 140 to 187 (MGSLSDLQREAIQLAYYEGLTYVQVSERLSANLATIKSRMRDGIRGLK). Residues 161–180 (YVQVSERLSANLATIKSRMR) constitute a DNA-binding region (H-T-H motif).

It belongs to the sigma-70 factor family. ECF subfamily. In terms of assembly, interacts transiently with the RNA polymerase catalytic core formed by RpoA, RpoB, RpoC and RpoZ (2 alpha, 1 beta, 1 beta' and 1 omega subunit) to form the RNA polymerase holoenzyme that can initiate transcription. Interacts (via sigma-70 factor domain 4) with anti-sigma-K factor RskA.

In terms of biological role, sigma factors are initiation factors that promote the attachment of RNA polymerase to specific initiation sites and are then released. Extracytoplasmic function (ECF) sigma factors are held in an inactive form by an anti-sigma factor until released by regulated intramembrane proteolysis. In Mycobacterium sp. (strain JLS), this protein is ECF RNA polymerase sigma factor SigK (sigK).